A 466-amino-acid polypeptide reads, in one-letter code: Transcription factor SOX-10 (466 aa).

5 disordered regions span residues 1–67 (MAEE…DDDK), 160–198 (LRMQ…TDQG), 213–275 (DHRH…DFGN), 355–375 (QVKT…QPST), and 433–466 (RPLY…LSRP). Over residues 23–32 (LSPSSAPSLG) the composition is skewed to low complexity. The residue at position 24 (S24) is a Phosphoserine. The tract at residues 62–102 (EADDDKFPVCIREAVSQVLSGYDWTLVPMPVRVNGASKSKP) is dimerization (DIM). The HMG box DNA-binding region spans 104-172 (VKRPMNAFMV…QHKKDHPDYK (69 aa)). Composition is skewed to basic and acidic residues over residues 160–173 (LRMQ…DYKY) and 254–271 (ADPK…KPHI). The segment at 228–310 (PEHPSGQSHG…LPPNGHPGHV (83 aa)) is transactivation domain (TAM). The tract at residues 353–466 (KAQVKTETTG…QPVYTTLSRP (114 aa)) is transactivation domain (TAC). Residues 440 to 466 (SDPSPSGPQSHSPTHWEQPVYTTLSRP) are compositionally biased toward polar residues.

As to quaternary structure, monomer. Interacts with Armcx3 at the mitochondrial outer membrane surface. Interacts with PAX3. In terms of tissue distribution, predominant expression in glial cells of the nervous system.

It is found in the cytoplasm. The protein resides in the nucleus. Its subcellular location is the mitochondrion outer membrane. Functionally, transcription factor that plays a central role in developing and mature glia. Specifically activates expression of myelin genes, during oligodendrocyte (OL) maturation, such as DUSP15 and MYRF, thereby playing a central role in oligodendrocyte maturation and CNS myelination. Once induced, MYRF cooperates with SOX10 to implement the myelination program. Transcriptional activator of MITF, acting synergistically with PAX3. Transcriptional activator of MBP, via binding to the gene promoter. This is Transcription factor SOX-10 (Sox10) from Rattus norvegicus (Rat).